The sequence spans 131 residues: Small ribosomal subunit protein uS11 (131 aa).

The protein belongs to the universal ribosomal protein uS11 family. Part of the 30S ribosomal subunit. Interacts with proteins S7 and S18. Binds to IF-3.

Located on the platform of the 30S subunit, it bridges several disparate RNA helices of the 16S rRNA. Forms part of the Shine-Dalgarno cleft in the 70S ribosome. In Deinococcus geothermalis (strain DSM 11300 / CIP 105573 / AG-3a), this protein is Small ribosomal subunit protein uS11.